The chain runs to 456 residues: tRNA-2-methylthio-N(6)-dimethylallyladenosine synthase (456 aa).

The MTTase N-terminal domain occupies 9–126 (KKLYIKTHGC…LPEMMETKKS (118 aa)). [4Fe-4S] cluster is bound by residues C18, C55, C89, C163, C167, and C170. The 233-residue stretch at 149 to 381 (DADGVSAFVS…QDRITQQAMA (233 aa)) folds into the Radical SAM core domain. One can recognise a TRAM domain in the interval 384–448 (RRMVGNTERI…PNSLRGSLIA (65 aa)).

It belongs to the methylthiotransferase family. MiaB subfamily. Monomer. It depends on [4Fe-4S] cluster as a cofactor.

Its subcellular location is the cytoplasm. It catalyses the reaction N(6)-dimethylallyladenosine(37) in tRNA + (sulfur carrier)-SH + AH2 + 2 S-adenosyl-L-methionine = 2-methylsulfanyl-N(6)-dimethylallyladenosine(37) in tRNA + (sulfur carrier)-H + 5'-deoxyadenosine + L-methionine + A + S-adenosyl-L-homocysteine + 2 H(+). Catalyzes the methylthiolation of N6-(dimethylallyl)adenosine (i(6)A), leading to the formation of 2-methylthio-N6-(dimethylallyl)adenosine (ms(2)i(6)A) at position 37 in tRNAs that read codons beginning with uridine. The protein is tRNA-2-methylthio-N(6)-dimethylallyladenosine synthase of Cellvibrio japonicus (strain Ueda107) (Pseudomonas fluorescens subsp. cellulosa).